The sequence spans 492 residues: Malonate-semialdehyde dehydrogenase (492 aa).

Residues F156, K180, E183, K184, S233, and T255 each contribute to the NAD(+) site. The active-site Nucleophile is C288. E387 lines the NAD(+) pocket.

It belongs to the aldehyde dehydrogenase family. IolA subfamily. In terms of assembly, homotetramer.

The catalysed reaction is 3-oxopropanoate + NAD(+) + CoA + H2O = hydrogencarbonate + acetyl-CoA + NADH + H(+). The enzyme catalyses 2-methyl-3-oxopropanoate + NAD(+) + CoA + H2O = propanoyl-CoA + hydrogencarbonate + NADH + H(+). The protein operates within polyol metabolism; myo-inositol degradation into acetyl-CoA; acetyl-CoA from myo-inositol: step 7/7. In terms of biological role, catalyzes the oxidation of malonate semialdehyde (MSA) and methylmalonate semialdehyde (MMSA) into acetyl-CoA and propanoyl-CoA, respectively. Is involved in a myo-inositol catabolic pathway. Bicarbonate, and not CO2, is the end-product of the enzymatic reaction. This Lacticaseibacillus casei (Lactobacillus casei) protein is Malonate-semialdehyde dehydrogenase.